The primary structure comprises 272 residues: S-adenosylmethionine decarboxylase proenzyme (272 aa).

Ser-122 acts as the Schiff-base intermediate with substrate; via pyruvic acid in catalysis. Ser-122 is modified (pyruvic acid (Ser); by autocatalysis). The active-site Proton acceptor; for processing activity is His-127. The active-site Proton donor; for catalytic activity is the Cys-150.

Belongs to the prokaryotic AdoMetDC family. Type 2 subfamily. As to quaternary structure, heterooctamer of four alpha and four beta chains arranged as a tetramer of alpha/beta heterodimers. Pyruvate serves as cofactor. In terms of processing, is synthesized initially as an inactive proenzyme. Formation of the active enzyme involves a self-maturation process in which the active site pyruvoyl group is generated from an internal serine residue via an autocatalytic post-translational modification. Two non-identical subunits are generated from the proenzyme in this reaction, and the pyruvate is formed at the N-terminus of the alpha chain, which is derived from the carboxyl end of the proenzyme. The post-translation cleavage follows an unusual pathway, termed non-hydrolytic serinolysis, in which the side chain hydroxyl group of the serine supplies its oxygen atom to form the C-terminus of the beta chain, while the remainder of the serine residue undergoes an oxidative deamination to produce ammonia and the pyruvoyl group blocking the N-terminus of the alpha chain.

The catalysed reaction is S-adenosyl-L-methionine + H(+) = S-adenosyl 3-(methylsulfanyl)propylamine + CO2. The protein operates within amine and polyamine biosynthesis; S-adenosylmethioninamine biosynthesis; S-adenosylmethioninamine from S-adenosyl-L-methionine: step 1/1. In terms of biological role, catalyzes the decarboxylation of S-adenosylmethionine to S-adenosylmethioninamine (dcAdoMet), the propylamine donor required for the synthesis of the polyamines spermine and spermidine from the diamine putrescine. This Clostridium botulinum (strain Alaska E43 / Type E3) protein is S-adenosylmethionine decarboxylase proenzyme.